A 190-amino-acid chain; its full sequence is Elongation factor P-like protein (190 aa).

It belongs to the elongation factor P family.

The chain is Elongation factor P-like protein from Pectobacterium atrosepticum (strain SCRI 1043 / ATCC BAA-672) (Erwinia carotovora subsp. atroseptica).